Consider the following 272-residue polypeptide: Undecaprenyl-diphosphatase (272 aa).

The next 7 membrane-spanning stretches (helical) occupy residues 2 to 22, 43 to 63, 82 to 102, 110 to 130, 185 to 205, 224 to 244, and 252 to 272; these read FDIIKAVIIGIVEGLTEFLPI, FISMFEYVIQFGAILAVVLLY, WQLWAKVIIAVLPSAVVGLPL, LHTPIVVATTLIVYGILFIIL, YVATEFSFFLAIPTMVGVLII, VLMTGSIVSFLVAIVAIKWLL, and FKPFGWYRIALGAIVLLVMFI.

The protein belongs to the UppP family.

It is found in the cell membrane. It catalyses the reaction di-trans,octa-cis-undecaprenyl diphosphate + H2O = di-trans,octa-cis-undecaprenyl phosphate + phosphate + H(+). Its function is as follows. Catalyzes the dephosphorylation of undecaprenyl diphosphate (UPP). Confers resistance to bacitracin. This chain is Undecaprenyl-diphosphatase, found in Lacticaseibacillus casei (strain BL23) (Lactobacillus casei).